We begin with the raw amino-acid sequence, 228 residues long: Lipoprotein-releasing system ATP-binding protein LolD (228 aa).

Residues 6 to 228 (LRCKELSKSY…KNGILHKEQG (223 aa)) enclose the ABC transporter domain. Residue 42-49 (GASGSGKS) participates in ATP binding.

This sequence belongs to the ABC transporter superfamily. Lipoprotein translocase (TC 3.A.1.125) family. As to quaternary structure, the complex is composed of two ATP-binding proteins (LolD) and two transmembrane proteins (LolC and LolE).

It localises to the cell inner membrane. Part of the ABC transporter complex LolCDE involved in the translocation of mature outer membrane-directed lipoproteins, from the inner membrane to the periplasmic chaperone, LolA. Responsible for the formation of the LolA-lipoprotein complex in an ATP-dependent manner. The chain is Lipoprotein-releasing system ATP-binding protein LolD from Idiomarina loihiensis (strain ATCC BAA-735 / DSM 15497 / L2-TR).